The primary structure comprises 245 residues: Phosphoadenosine 5'-phosphosulfate reductase (245 aa).

C239 serves as the catalytic Nucleophile; cysteine thiosulfonate intermediate.

This sequence belongs to the PAPS reductase family. CysH subfamily.

The protein resides in the cytoplasm. The catalysed reaction is [thioredoxin]-disulfide + sulfite + adenosine 3',5'-bisphosphate + 2 H(+) = [thioredoxin]-dithiol + 3'-phosphoadenylyl sulfate. Its pathway is sulfur metabolism; hydrogen sulfide biosynthesis; sulfite from sulfate: step 3/3. In terms of biological role, catalyzes the formation of sulfite from phosphoadenosine 5'-phosphosulfate (PAPS) using thioredoxin as an electron donor. This Shewanella oneidensis (strain ATCC 700550 / JCM 31522 / CIP 106686 / LMG 19005 / NCIMB 14063 / MR-1) protein is Phosphoadenosine 5'-phosphosulfate reductase.